The following is a 251-amino-acid chain: tRNA (guanine-N(1)-)-methyltransferase (251 aa).

S-adenosyl-L-methionine contacts are provided by residues G113 and 133-138; that span reads IGDYVL.

Belongs to the RNA methyltransferase TrmD family. Homodimer.

It localises to the cytoplasm. The catalysed reaction is guanosine(37) in tRNA + S-adenosyl-L-methionine = N(1)-methylguanosine(37) in tRNA + S-adenosyl-L-homocysteine + H(+). In terms of biological role, specifically methylates guanosine-37 in various tRNAs. In Pectobacterium carotovorum subsp. carotovorum (strain PC1), this protein is tRNA (guanine-N(1)-)-methyltransferase.